Here is a 326-residue protein sequence, read N- to C-terminus: Ribosomal large subunit pseudouridine synthase D (326 aa).

The active site involves Asp144.

The protein belongs to the pseudouridine synthase RluA family.

Its subcellular location is the cytoplasm. It catalyses the reaction uridine(1911/1915/1917) in 23S rRNA = pseudouridine(1911/1915/1917) in 23S rRNA. Functionally, responsible for synthesis of pseudouridine from uracil at positions 1911, 1915 and 1917 in 23S ribosomal RNA. This is Ribosomal large subunit pseudouridine synthase D from Borreliella burgdorferi (strain ATCC 35210 / DSM 4680 / CIP 102532 / B31) (Borrelia burgdorferi).